The sequence spans 124 residues: uncharacterized protein (124 aa).

Residues 42-118 (DKGGIFMFYN…INTQHSKYNI (77 aa)) form the GIY-YIG domain.

This is an uncharacterized protein from Bacillus subtilis (strain 168).